The following is a 491-amino-acid chain: Proline--tRNA ligase (491 aa).

It belongs to the class-II aminoacyl-tRNA synthetase family. ProS type 3 subfamily. In terms of assembly, homodimer.

It localises to the cytoplasm. The catalysed reaction is tRNA(Pro) + L-proline + ATP = L-prolyl-tRNA(Pro) + AMP + diphosphate. Its function is as follows. Catalyzes the attachment of proline to tRNA(Pro) in a two-step reaction: proline is first activated by ATP to form Pro-AMP and then transferred to the acceptor end of tRNA(Pro). This chain is Proline--tRNA ligase, found in Halorubrum lacusprofundi (strain ATCC 49239 / DSM 5036 / JCM 8891 / ACAM 34).